Here is a 247-residue protein sequence, read N- to C-terminus: Probable transcriptional regulatory protein ABO_0750 (247 aa).

The protein belongs to the TACO1 family.

It is found in the cytoplasm. The chain is Probable transcriptional regulatory protein ABO_0750 from Alcanivorax borkumensis (strain ATCC 700651 / DSM 11573 / NCIMB 13689 / SK2).